Consider the following 621-residue polypeptide: Laccase-2 (621 aa).

Residues 1–23 (MMKSFFSAAALLLGLVAPSAVLA) form the signal peptide. A propeptide spanning residues 24–48 (APSLPGVPREVTRDLLRPVEERQSS) is cleaved from the precursor. Cysteine 49 and cysteine 57 are oxidised to a cystine. Plastocyanin-like domains lie at 78-201 (TRTY…IVVN) and 210-367 (IDLG…LPTN). Residue asparagine 133 is glycosylated (N-linked (GlcNAc...) asparagine). Positions 138, 140, 183, and 185 each coordinate Cu cation. 2 disulfide bridges follow: cysteine 159–cysteine 586 and cysteine 343–cysteine 377. N-linked (GlcNAc...) asparagine glycosylation is found at asparagine 261, asparagine 276, asparagine 289, asparagine 325, and asparagine 334. N-linked (GlcNAc...) asparagine glycosylation is found at asparagine 401, asparagine 421, and asparagine 441. One can recognise a Plastocyanin-like 3 domain in the interval 430–566 (DKPIVDYVIA…GGLSVQYLER (137 aa)). The Cu cation site is built by histidine 476, histidine 479, histidine 481, histidine 548, cysteine 549, histidine 550, and histidine 554. A propeptide spanning residues 606–621 (KVKKWVGEHPDWYIKN) is cleaved from the precursor.

The protein belongs to the multicopper oxidase family. In terms of assembly, monomer. The cofactor is Cu cation. Post-translationally, proteolytically processed at both its N-terminus and its C-terminus.

It is found in the secreted. The enzyme catalyses 4 hydroquinone + O2 = 4 benzosemiquinone + 2 H2O. Functionally, probably involved in lignin degradation and in the detoxification of lignin-derived products in its natural habitat (herbivorous dung), which is rich in lignin of grasses and straw. Probably involved in melanin synthesis and in perithecia development. The polypeptide is Laccase-2 (LAC2) (Podospora anserina (Pleurage anserina)).